The primary structure comprises 337 residues: Glyceraldehyde-3-phosphate dehydrogenase (337 aa).

NAD(+)-binding positions include 12–13, Asp-34, Arg-78, and Thr-121; that span reads RI. Residues 151–153, Thr-182, Arg-199, 212–213, and Arg-235 each bind D-glyceraldehyde 3-phosphate; these read SCT and SG. Cys-152 (nucleophile) is an active-site residue. Asn-317 is a binding site for NAD(+).

It belongs to the glyceraldehyde-3-phosphate dehydrogenase family. As to quaternary structure, homotetramer.

The protein localises to the cytoplasm. The catalysed reaction is D-glyceraldehyde 3-phosphate + phosphate + NAD(+) = (2R)-3-phospho-glyceroyl phosphate + NADH + H(+). Its pathway is carbohydrate degradation; glycolysis; pyruvate from D-glyceraldehyde 3-phosphate: step 1/5. In terms of biological role, catalyzes the oxidative phosphorylation of glyceraldehyde 3-phosphate (G3P) to 1,3-bisphosphoglycerate (BPG) using the cofactor NAD. The first reaction step involves the formation of a hemiacetal intermediate between G3P and a cysteine residue, and this hemiacetal intermediate is then oxidized to a thioester, with concomitant reduction of NAD to NADH. The reduced NADH is then exchanged with the second NAD, and the thioester is attacked by a nucleophilic inorganic phosphate to produce BPG. This chain is Glyceraldehyde-3-phosphate dehydrogenase (gap), found in Lactococcus lactis subsp. lactis (strain IL1403) (Streptococcus lactis).